Consider the following 202-residue polypeptide: Histone chaperone ASF1B (202 aa).

The interaction with CHAF1B stretch occupies residues 1–155 (MAKVSVLNVA…VTRFHINWDN (155 aa)). An interaction with histone H3 region spans residues 1 to 156 (MAKVSVLNVA…TRFHINWDNN (156 aa)). S198 carries the post-translational modification Phosphoserine; by TLK2.

It belongs to the ASF1 family. Interacts with histone H3 (via C-terminus), including histone H3.1, H3.2 and H3.3, and histone H4; the interaction with H3 is direct. Interacts with the CHAF1A, CHAF1B and RBBP4 subunits of the CAF-1 complex. Interacts with HAT1, NASP and TAF1. Found in a soluble complex with NASP and histones H3 and H4; the interaction with NASP is probably indirect and mediated by H3-H4. Interacts with CDAN1. Found in a cytosolic complex with IPO4 and histones H3 and H4. Interacts with CREBBP. In terms of processing, phosphorylated by TLK1 and TLK2. Highly expressed in testis and at lower levels in colon, small intestine and thymus.

The protein resides in the nucleus. It localises to the cytoplasm. Its subcellular location is the cytosol. Functionally, histone chaperone that facilitates histone deposition and histone exchange and removal during nucleosome assembly and disassembly. Cooperates with chromatin assembly factor 1 (CAF-1) to promote replication-dependent chromatin assembly. Also involved in the nuclear import of the histone H3-H4 dimer together with importin-4 (IPO4): specifically recognizes and binds newly synthesized histones with the monomethylation of H3 'Lys-9' (H3K9me1) and diacetylation at 'Lys-5' and 'Lys-12' of H4 (H4K5K12ac) marks in the cytosol. Does not participate in replication-independent nucleosome deposition which is mediated by ASF1A and HIRA. Required for gonad development. The polypeptide is Histone chaperone ASF1B (Homo sapiens (Human)).